A 962-amino-acid polypeptide reads, in one-letter code: Exportin-T (962 aa).

Methionine 1 bears the N-acetylmethionine mark. An N6-acetyllysine modification is found at lysine 634.

In terms of assembly, found in a complex with XPOT, Ran and tRNA. Probably found in a complex with nucleoporins. Interacts with Ran and tRNA in a GTP-dependent manner.

Its subcellular location is the nucleus. It localises to the cytoplasm. Its function is as follows. Mediates the nuclear export of aminoacylated tRNAs. In the nucleus binds to tRNA and to the GTPase Ran in its active GTP-bound form. Docking of this trimeric complex to the nuclear pore complex (NPC) is mediated through binding to nucleoporins. Upon transit of a nuclear export complex into the cytoplasm, disassembling of the complex and hydrolysis of Ran-GTP to Ran-GDP (induced by RANBP1 and RANGAP1, respectively) cause release of the tRNA from the export receptor. XPOT then return to the nuclear compartment and mediate another round of transport. The directionality of nuclear export is thought to be conferred by an asymmetric distribution of the GTP- and GDP-bound forms of Ran between the cytoplasm and nucleus. The polypeptide is Exportin-T (XPOT) (Pongo abelii (Sumatran orangutan)).